We begin with the raw amino-acid sequence, 110 residues long: Large ribosomal subunit protein uL22 (110 aa).

It belongs to the universal ribosomal protein uL22 family. Part of the 50S ribosomal subunit.

This protein binds specifically to 23S rRNA; its binding is stimulated by other ribosomal proteins, e.g. L4, L17, and L20. It is important during the early stages of 50S assembly. It makes multiple contacts with different domains of the 23S rRNA in the assembled 50S subunit and ribosome. Functionally, the globular domain of the protein is located near the polypeptide exit tunnel on the outside of the subunit, while an extended beta-hairpin is found that lines the wall of the exit tunnel in the center of the 70S ribosome. The protein is Large ribosomal subunit protein uL22 of Haemophilus influenzae (strain 86-028NP).